The chain runs to 49 residues: Small, acid-soluble spore protein O (49 aa).

A disordered region spans residues 1 to 49; the sequence is MGKRKANHTISGMNAASAQGQGAGYNEEFANENLTAAERQNNKKRKKNQ. Residues 8–20 are compositionally biased toward polar residues; it reads HTISGMNAASAQG.

The protein belongs to the SspO family.

The protein localises to the spore core. The protein is Small, acid-soluble spore protein O of Bacillus cereus (strain AH187).